A 352-amino-acid chain; its full sequence is N-acetyl-gamma-glutamyl-phosphate reductase (352 aa).

Cys155 is an active-site residue.

This sequence belongs to the NAGSA dehydrogenase family. Type 1 subfamily.

It localises to the cytoplasm. The enzyme catalyses N-acetyl-L-glutamate 5-semialdehyde + phosphate + NADP(+) = N-acetyl-L-glutamyl 5-phosphate + NADPH + H(+). It participates in amino-acid biosynthesis; L-arginine biosynthesis; N(2)-acetyl-L-ornithine from L-glutamate: step 3/4. Functionally, catalyzes the NADPH-dependent reduction of N-acetyl-5-glutamyl phosphate to yield N-acetyl-L-glutamate 5-semialdehyde. The protein is N-acetyl-gamma-glutamyl-phosphate reductase of Acaryochloris marina (strain MBIC 11017).